The primary structure comprises 444 residues: Methylenetetrahydrofolate--tRNA-(uracil-5-)-methyltransferase TrmFO (444 aa).

11–16 (GGGLAG) is a binding site for FAD.

This sequence belongs to the MnmG family. TrmFO subfamily. FAD serves as cofactor.

It localises to the cytoplasm. The catalysed reaction is uridine(54) in tRNA + (6R)-5,10-methylene-5,6,7,8-tetrahydrofolate + NADH + H(+) = 5-methyluridine(54) in tRNA + (6S)-5,6,7,8-tetrahydrofolate + NAD(+). It carries out the reaction uridine(54) in tRNA + (6R)-5,10-methylene-5,6,7,8-tetrahydrofolate + NADPH + H(+) = 5-methyluridine(54) in tRNA + (6S)-5,6,7,8-tetrahydrofolate + NADP(+). Functionally, catalyzes the folate-dependent formation of 5-methyl-uridine at position 54 (M-5-U54) in all tRNAs. The sequence is that of Methylenetetrahydrofolate--tRNA-(uracil-5-)-methyltransferase TrmFO from Desulfotalea psychrophila (strain LSv54 / DSM 12343).